The primary structure comprises 254 residues: Allene oxide cyclase 4, chloroplastic (254 aa).

The N-terminal 52 residues, 1–52, are a transit peptide targeting the chloroplast; it reads MIMASSAAASISMITLRNLSRNHQSHQSTFLGFSRSFHNQRISSNSPGLSTR.

This sequence belongs to the allene oxide cyclase family. As to expression, highly expressed in fully developed leaves.

It localises to the plastid. The protein resides in the chloroplast. It carries out the reaction (9Z,13S,15Z)-12,13-epoxyoctadeca-9,11,15-trienoate = (9S,13S,15Z)-12-oxophyto-10,15-dienoate. Involved in the production of 12-oxo-phytodienoic acid (OPDA), a precursor of jasmonic acid. This Arabidopsis thaliana (Mouse-ear cress) protein is Allene oxide cyclase 4, chloroplastic (AOC4).